Reading from the N-terminus, the 307-residue chain is Protein phosphatase PTC7 homolog fig (307 aa).

One can recognise a PPM-type phosphatase domain in the interval 41 to 300 (VQGSSKDQQL…DDITVILASV (260 aa)). Mn(2+) is bound by residues Asp77, Gly78, and Asp222.

It belongs to the PP2C family. Mg(2+) serves as cofactor. Mn(2+) is required as a cofactor.

The enzyme catalyses O-phospho-L-seryl-[protein] + H2O = L-seryl-[protein] + phosphate. The catalysed reaction is O-phospho-L-threonyl-[protein] + H2O = L-threonyl-[protein] + phosphate. The sequence is that of Protein phosphatase PTC7 homolog fig from Drosophila grimshawi (Hawaiian fruit fly).